A 525-amino-acid polypeptide reads, in one-letter code: Ribonuclease III domain-containing protein RNC1, chloroplastic (525 aa).

A chloroplast-targeting transit peptide spans M1 to R28. RNase III domains lie at L125–G271 and E403–G503.

As to quaternary structure, interacts with RNA. Part of large ribonucleo-protein particles that contain CAF1 and/or CAF2.

The protein resides in the plastid. The protein localises to the chloroplast stroma. Functionally, binds specific group II introns in chloroplasts and facilitates their splicing. Acts on both subgroup IIA and subgroup IIB introns. The substrates of the subgroup II also require the CRM domain proteins CAF1 or CAF2. Binds both single-stranded and double-stranded RNA non-specifically, but lacks endonuclease activity. Required for plastid ribosome biogenesis. The polypeptide is Ribonuclease III domain-containing protein RNC1, chloroplastic (Zea mays (Maize)).